Here is a 158-residue protein sequence, read N- to C-terminus: NADH-quinone oxidoreductase subunit B (158 aa).

Positions 37, 38, 102, and 132 each coordinate [4Fe-4S] cluster.

The protein belongs to the complex I 20 kDa subunit family. As to quaternary structure, NDH-1 is composed of 14 different subunits. Subunits NuoB, C, D, E, F, and G constitute the peripheral sector of the complex. [4Fe-4S] cluster is required as a cofactor.

Its subcellular location is the cell inner membrane. The enzyme catalyses a quinone + NADH + 5 H(+)(in) = a quinol + NAD(+) + 4 H(+)(out). Functionally, NDH-1 shuttles electrons from NADH, via FMN and iron-sulfur (Fe-S) centers, to quinones in the respiratory chain. Couples the redox reaction to proton translocation (for every two electrons transferred, four hydrogen ions are translocated across the cytoplasmic membrane), and thus conserves the redox energy in a proton gradient. The protein is NADH-quinone oxidoreductase subunit B of Hydrogenovibrio crunogenus (strain DSM 25203 / XCL-2) (Thiomicrospira crunogena).